The sequence spans 222 residues: Collectrin (222 aa).

A signal peptide spans methionine 1 to alanine 14. Topologically, residues glutamate 15–proline 141 are extracellular. Positions alanine 21–leucine 222 constitute a Collectrin-like domain. N-linked (GlcNAc...) asparagine glycosylation is found at asparagine 76 and asparagine 93. A helical membrane pass occupies residues isoleucine 142–isoleucine 162. Residues leucine 163 to leucine 222 are Cytoplasmic-facing. Phosphothreonine occurs at positions 214 and 220.

This sequence belongs to the CLTRN family. Monomer. Homodimer; dimerization prevents CLTRN cleavage by BACE2. Interacts with SLC6A18; this interaction regulates the trafficking of SLC6A18 to the cell membrane and its amino acid transporter activity. Interacts with SLC6A19; this interaction regulates the trafficking of SLC6A19 to the cell membrane and its amino acid transporter activity. Interacts with SNAPIN. Glycosylated. Glycosylation is required for plasma membrane localization and for its cleavage by BACE2. Post-translationally, proteolytically processed in pancreatic beta cells by BACE2 leading to the generation and extracellular release of soluble CLTRN, and a corresponding cell-associated C-terminal fragment which is later cleaved by gamma-secretase. This shedding process inactivates CLTRN. Three cleavage sites have been identified for BACE2, two clustered sites after Phe-116 and Leu-118 and a more membrane proximal site at Phe-125; the preferred BACE2 cleavage site seems to be between Phe-125 and Leu-126, Phe-116 and Leu-118 act as alternative sites. Kidney; collecting ducts. Pancreas; beta cells of islets.

It localises to the cell membrane. Functionally, plays an important role in amino acid transport by acting as binding partner of amino acid transporters SLC6A18 and SLC6A19, regulating their trafficking on the cell surface and their amino acid transporter activity. May also play a role in trafficking of amino acid transporters SLC3A1 and SLC7A9 to the renal cortical cell membrane. Regulator of SNARE complex function. Stimulator of beta cell replication. This chain is Collectrin, found in Homo sapiens (Human).